A 346-amino-acid chain; its full sequence is Histone PARylation factor 1 (346 aa).

The residue at position 1 (Met1) is an N-acetylmethionine. Residues 1–10 (MVGGGAKRRL) show a composition bias toward basic residues. Residues 1 to 29 (MVGGGAKRRLRGEGPQCEKPVDMKKSKSC) are disordered. Lys19 bears the N6-acetyllysine mark. Residues 19-29 (KPVDMKKSKSC) show a composition bias toward basic and acidic residues. Ser97 is modified (ADP-ribosylserine). N6-acetyllysine occurs at positions 186 and 233. Asp235 carries the polyADP-ribosyl aspartic acid modification. ADP-ribosyltyrosine is present on Tyr238. The residue at position 240 (Glu240) is a PolyADP-ribosyl glutamic acid. Residues 242-346 (PETDASLRRI…SQDDVDQLAA (105 aa)) are interaction with PARP1. Catalysis depends on Glu284, which acts as the Proton donor.

This sequence belongs to the HPF1 family. As to quaternary structure, interacts with PARP1 (via the PARP catalytic domain). Interacts with PARP2 (via the PARP catalytic domain). Interacts with core nucleosomes in a PARP1- and PARP2-dependent manner.

It localises to the chromosome. The protein localises to the nucleus. In terms of biological role, cofactor for serine ADP-ribosylation that confers serine specificity on PARP1 and PARP2 and plays a key role in DNA damage response. Initiates the repair of double-strand DNA breaks: recruited to DNA damage sites by PARP1 and PARP2 and switches the amino acid specificity of PARP1 and PARP2 from aspartate or glutamate to serine residues, licensing serine ADP-ribosylation of target proteins. Serine ADP-ribosylation of target proteins, such as histones, promotes decompaction of chromatin and the recruitment of repair factors leading to the reparation of DNA strand breaks. Serine ADP-ribosylation of proteins constitutes the primary form of ADP-ribosylation of proteins in response to DNA damage. HPF1 acts by completing the active site of PARP1 and PARP2: forms a composite active site composed of residues from HPF1 and PARP1 or PARP2. While HPF1 promotes the initiation of serine ADP-ribosylation, it restricts the polymerase activity of PARP1 and PARP2 in order to limit the length of poly-ADP-ribose chains. HPF1 also promotes tyrosine ADP-ribosylation, probably by conferring tyrosine specificity on PARP1. In Bos taurus (Bovine), this protein is Histone PARylation factor 1.